Consider the following 231-residue polypeptide: ATP phosphoribosyltransferase (231 aa).

This sequence belongs to the ATP phosphoribosyltransferase family. Short subfamily. As to quaternary structure, heteromultimer composed of HisG and HisZ subunits.

Its subcellular location is the cytoplasm. It catalyses the reaction 1-(5-phospho-beta-D-ribosyl)-ATP + diphosphate = 5-phospho-alpha-D-ribose 1-diphosphate + ATP. It functions in the pathway amino-acid biosynthesis; L-histidine biosynthesis; L-histidine from 5-phospho-alpha-D-ribose 1-diphosphate: step 1/9. Functionally, catalyzes the condensation of ATP and 5-phosphoribose 1-diphosphate to form N'-(5'-phosphoribosyl)-ATP (PR-ATP). Has a crucial role in the pathway because the rate of histidine biosynthesis seems to be controlled primarily by regulation of HisG enzymatic activity. This Rhizobium etli (strain ATCC 51251 / DSM 11541 / JCM 21823 / NBRC 15573 / CFN 42) protein is ATP phosphoribosyltransferase (hisG).